The following is a 315-amino-acid chain: Transaldolase (315 aa).

The Schiff-base intermediate with substrate role is filled by Lys-131.

It belongs to the transaldolase family. Type 1 subfamily. In terms of assembly, homodimer.

It is found in the cytoplasm. It carries out the reaction D-sedoheptulose 7-phosphate + D-glyceraldehyde 3-phosphate = D-erythrose 4-phosphate + beta-D-fructose 6-phosphate. The protein operates within carbohydrate degradation; pentose phosphate pathway; D-glyceraldehyde 3-phosphate and beta-D-fructose 6-phosphate from D-ribose 5-phosphate and D-xylulose 5-phosphate (non-oxidative stage): step 2/3. Functionally, transaldolase is important for the balance of metabolites in the pentose-phosphate pathway. In Haemophilus ducreyi (strain 35000HP / ATCC 700724), this protein is Transaldolase.